Here is a 396-residue protein sequence, read N- to C-terminus: Pectinesterase (396 aa).

Positions 1–26 are cleaved as a signal peptide; sequence MQSTTLYLKTAAFLGGCSLFAATALA. Substrate is bound at residue threonine 174. The active-site Proton donor is aspartate 232. Residue aspartate 259 is the Nucleophile of the active site. Arginine 324 and tryptophan 326 together coordinate substrate.

It belongs to the pectinesterase family.

It is found in the secreted. The catalysed reaction is [(1-&gt;4)-alpha-D-galacturonosyl methyl ester](n) + n H2O = [(1-&gt;4)-alpha-D-galacturonosyl](n) + n methanol + n H(+). It participates in glycan metabolism; pectin degradation; 2-dehydro-3-deoxy-D-gluconate from pectin: step 1/5. Its function is as follows. Involved in maceration and soft-rotting of plant tissue. This is Pectinesterase (pme) from Ralstonia solanacearum (Pseudomonas solanacearum).